We begin with the raw amino-acid sequence, 253 residues long: Phosphate import ATP-binding protein PstB (253 aa).

One can recognise an ABC transporter domain in the interval 5–248; sequence IETVNLNVYY…PEHELTEKYV (244 aa). 37–44 provides a ligand contact to ATP; sequence GPSGCGKS.

The protein belongs to the ABC transporter superfamily. Phosphate importer (TC 3.A.1.7) family. The complex is composed of two ATP-binding proteins (PstB), two transmembrane proteins (PstC and PstA) and a solute-binding protein (PstS).

The protein localises to the cell membrane. The enzyme catalyses phosphate(out) + ATP + H2O = ADP + 2 phosphate(in) + H(+). Part of the ABC transporter complex PstSACB involved in phosphate import. Responsible for energy coupling to the transport system. This chain is Phosphate import ATP-binding protein PstB, found in Thermococcus kodakarensis (strain ATCC BAA-918 / JCM 12380 / KOD1) (Pyrococcus kodakaraensis (strain KOD1)).